The sequence spans 353 residues: RNA 3'-terminal phosphate cyclase (353 aa).

ATP-binding positions include glutamine 100 and 289–292; that span reads HMSD. The active-site Tele-AMP-histidine intermediate is histidine 315.

Belongs to the RNA 3'-terminal cyclase family. Type 1 subfamily.

It is found in the cytoplasm. The enzyme catalyses a 3'-end 3'-phospho-ribonucleotide-RNA + ATP = a 3'-end 2',3'-cyclophospho-ribonucleotide-RNA + AMP + diphosphate. Functionally, catalyzes the conversion of 3'-phosphate to a 2',3'-cyclic phosphodiester at the end of RNA. The mechanism of action of the enzyme occurs in 3 steps: (A) adenylation of the enzyme by ATP; (B) transfer of adenylate to an RNA-N3'P to produce RNA-N3'PP5'A; (C) and attack of the adjacent 2'-hydroxyl on the 3'-phosphorus in the diester linkage to produce the cyclic end product. The biological role of this enzyme is unknown but it is likely to function in some aspects of cellular RNA processing. This chain is RNA 3'-terminal phosphate cyclase, found in Ignicoccus hospitalis (strain KIN4/I / DSM 18386 / JCM 14125).